A 121-amino-acid chain; its full sequence is Small ribosomal subunit protein uS13 (121 aa).

A disordered region spans residues 91–121; the sequence is HRKGLPMRGQRTRTNARTRKGPRKAGVALKK.

It belongs to the universal ribosomal protein uS13 family. Part of the 30S ribosomal subunit. Forms a loose heterodimer with protein S19. Forms two bridges to the 50S subunit in the 70S ribosome.

Functionally, located at the top of the head of the 30S subunit, it contacts several helices of the 16S rRNA. In the 70S ribosome it contacts the 23S rRNA (bridge B1a) and protein L5 of the 50S subunit (bridge B1b), connecting the 2 subunits; these bridges are implicated in subunit movement. Contacts the tRNAs in the A and P-sites. The protein is Small ribosomal subunit protein uS13 of Cupriavidus necator (strain ATCC 17699 / DSM 428 / KCTC 22496 / NCIMB 10442 / H16 / Stanier 337) (Ralstonia eutropha).